The following is a 435-amino-acid chain: Membrane-bound ghrelin O-acyltransferase MBOAT4 (435 aa).

The Lumenal segment spans residues methionine 1–glutamine 5. A helical transmembrane segment spans residues phenylalanine 6–phenylalanine 26. Over asparagine 27–arginine 40 the chain is Cytoplasmic. Residues tyrosine 41–methionine 56 form a helical membrane-spanning segment. The Lumenal segment spans residues glycine 57–tyrosine 59. Residues alanine 60–serine 76 form a helical membrane-spanning segment. Residues leucine 77 to valine 82 are Cytoplasmic-facing. A helical membrane pass occupies residues histidine 83–leucine 101. Topologically, residues histidine 102 to leucine 120 are lumenal. The chain crosses the membrane as a helical span at residues serine 121–aspartate 136. Topologically, residues isoleucine 137 to threonine 206 are cytoplasmic. Residues tryptophan 207–serine 227 form a helical membrane-spanning segment. Residues alanine 228 to cysteine 240 are Lumenal-facing. Residues isoleucine 241–leucine 261 traverse the membrane as a helical segment. The Cytoplasmic segment spans residues aspartate 262–arginine 324. Catalysis depends on residues asparagine 307 and histidine 338. The helical transmembrane segment at tryptophan 325–histidine 338 threads the bilayer. The Lumenal segment spans residues glycine 339–leucine 340. A helical transmembrane segment spans residues histidine 341–alanine 357. Residues aspartate 358–leucine 376 are Cytoplasmic-facing. The helical transmembrane segment at leucine 377–valine 397 threads the bilayer. The Lumenal segment spans residues glutamate 398–arginine 407. A helical membrane pass occupies residues leucine 408–alanine 428. Topologically, residues arginine 429–asparagine 435 are cytoplasmic.

The protein belongs to the membrane-bound acyltransferase family. Monomer. In terms of processing, not glycosylated.

The protein resides in the endoplasmic reticulum membrane. The catalysed reaction is octanoyl-CoA + L-seryl-[protein] = O-octanoyl-L-seryl-[protein] + CoA. The enzyme catalyses decanoyl-CoA + L-seryl-[protein] = O-decanoyl-L-seryl-[protein] + CoA. It catalyses the reaction L-seryl-[protein] + acetyl-CoA = O-acetyl-L-seryl-[protein] + CoA. It carries out the reaction L-seryl-[protein] + butanoyl-CoA = O-butanoyl-L-seryl-[protein] + CoA. The catalysed reaction is pentanoyl-CoA + L-seryl-[protein] = O-pentanoyl-L-seryl-[protein] + CoA. The enzyme catalyses hexanoyl-CoA + L-seryl-[protein] = O-hexanoyl-L-seryl-[protein] + CoA. It catalyses the reaction heptanoyl-CoA + L-seryl-[protein] = O-heptanoyl-L-seryl-[protein] + CoA. It carries out the reaction nonanoyl-CoA + L-seryl-[protein] = O-nonanoyl-L-seryl-[protein] + CoA. The catalysed reaction is L-seryl-[protein] + dodecanoyl-CoA = O-dodecanoyl-L-seryl-[protein] + CoA. The enzyme catalyses L-seryl-[protein] + tetradecanoyl-CoA = O-tetradecanoyl-L-seryl-[protein] + CoA. It catalyses the reaction a fatty acyl-CoA + L-seryl-[protein] = O-fatty acyl-L-seryl-[protein] + CoA. Its function is as follows. Catalyzes ghrelin acylation at 'Ser-3' using preferentially octanoyl-CoA, hexanoyl-CoA and decanoyl-CoA as acyl-CoA donors leading to ghrelin activity. In vitro uses also acyl-CoA donors of different lengths from short-chain (C2) to long-chain fatty acids (C16) knowing that acyl-CoA donors from butanoyl-CoA (C4) to dodecanoyl-CoA (C12) are more efficient compared to longer acyl-CoA donors, such as myristoyl-CoA (C14) and palmitoyl-CoA (C16) that are not efficient. This is Membrane-bound ghrelin O-acyltransferase MBOAT4 from Rattus norvegicus (Rat).